A 190-amino-acid polypeptide reads, in one-letter code: Peptidyl-tRNA hydrolase (190 aa).

Tyr-14 is a binding site for tRNA. His-19 functions as the Proton acceptor in the catalytic mechanism. Tyr-64, Asn-66, and Asn-112 together coordinate tRNA.

It belongs to the PTH family. In terms of assembly, monomer.

It is found in the cytoplasm. It carries out the reaction an N-acyl-L-alpha-aminoacyl-tRNA + H2O = an N-acyl-L-amino acid + a tRNA + H(+). Hydrolyzes ribosome-free peptidyl-tRNAs (with 1 or more amino acids incorporated), which drop off the ribosome during protein synthesis, or as a result of ribosome stalling. Its function is as follows. Catalyzes the release of premature peptidyl moieties from peptidyl-tRNA molecules trapped in stalled 50S ribosomal subunits, and thus maintains levels of free tRNAs and 50S ribosomes. The chain is Peptidyl-tRNA hydrolase from Chlorobaculum parvum (strain DSM 263 / NCIMB 8327) (Chlorobium vibrioforme subsp. thiosulfatophilum).